Here is a 245-residue protein sequence, read N- to C-terminus: 14-3-3 protein theta (245 aa).

At Met-1 the chain carries N-acetylmethionine. Residue Lys-3 is modified to N6-acetyllysine. Lys-49 carries the N6-acetyllysine; alternate modification. A Glycyl lysine isopeptide (Lys-Gly) (interchain with G-Cter in SUMO2); alternate cross-link involves residue Lys-49. An N6-acetyllysine modification is found at Lys-68. Tyr-82 is modified (3'-nitrotyrosine). Ser-92 is subject to Phosphoserine. 3'-nitrotyrosine is present on Tyr-104. Lys-115 carries the post-translational modification N6-acetyllysine. A Phosphoserine; by CK1 modification is found at Ser-232.

Belongs to the 14-3-3 family. Homodimer. Interacts with CDK16. Interacts with RGS7 (phosphorylated form). Interacts with SSH1. Interacts with CDKN1B ('Thr-198' phosphorylated form); the interaction translocates CDKN1B to the cytoplasm. Interacts with GAB2. Interacts with the 'Ser-241' phosphorylated form of PDPK1. Interacts with the 'Thr-369' phosphorylated form of DAPK2. Interacts with PI4KB, TBC1D22A and TBC1D22B. Interacts with SLITRK1. Interacts with RIPOR2. Interacts with INAVA; the interaction increases upon PRR (pattern recognition receptor) stimulation and is required for cellular signaling pathway activation and cytokine secretion. Interacts with MARK2, MARK3 and MARK4. Interacts with MEFV.

It localises to the cytoplasm. Its function is as follows. Adapter protein implicated in the regulation of a large spectrum of both general and specialized signaling pathways. Binds to a large number of partners, usually by recognition of a phosphoserine or phosphothreonine motif. Binding generally results in the modulation of the activity of the binding partner. Negatively regulates the kinase activity of PDPK1. This is 14-3-3 protein theta (YWHAQ) from Bos taurus (Bovine).